The following is a 128-amino-acid chain: uncharacterized protein (128 aa).

4 helical membrane passes run 2 to 22, 34 to 54, 64 to 84, and 108 to 128; these read LPFYFLSVATNAAIGFILTVL, FLYDATFSLVLALLSGIAAVC, LPVLGDLIPTLAGGTGCALFL, and LGLFSLAASILHLLFAPTLFL.

The protein localises to the cell membrane. This is an uncharacterized protein from Treponema pallidum (strain Nichols).